Consider the following 250-residue polypeptide: Bacteriorhodopsin-II (250 aa).

7 consecutive transmembrane segments (helical) span residues Glu14–Ala34, Val49–Phe69, Tyr89–Ala109, Met114–Met134, Ala142–Val162, Ile183–Gly203, and Glu210–Leu230. Residue Lys222 is modified to N6-(retinylidene)lysine.

It belongs to the archaeal/bacterial/fungal opsin family. Post-translationally, the covalent binding of retinal to the apoprotein, bacterioopsin, generates bacteriorhodopsin.

It is found in the membrane. In terms of biological role, light-driven proton pump. This is Bacteriorhodopsin-II (xop1) from Haloarcula marismortui (strain ATCC 43049 / DSM 3752 / JCM 8966 / VKM B-1809) (Halobacterium marismortui).